A 305-amino-acid chain; its full sequence is Homoserine O-acetyltransferase (305 aa).

The active-site Acyl-thioester intermediate is the cysteine 142. Substrate is bound by residues lysine 163 and serine 192. The active-site Proton acceptor is the histidine 235. Glutamate 237 is a catalytic residue. Arginine 249 serves as a coordination point for substrate.

The protein belongs to the MetA family.

Its subcellular location is the cytoplasm. It carries out the reaction L-homoserine + acetyl-CoA = O-acetyl-L-homoserine + CoA. Its pathway is amino-acid biosynthesis; L-methionine biosynthesis via de novo pathway; O-acetyl-L-homoserine from L-homoserine: step 1/1. Its function is as follows. Transfers an acetyl group from acetyl-CoA to L-homoserine, forming acetyl-L-homoserine. The polypeptide is Homoserine O-acetyltransferase (Cereibacter sphaeroides (strain KD131 / KCTC 12085) (Rhodobacter sphaeroides)).